The primary structure comprises 505 residues: ATP synthase subunit alpha (505 aa).

Position 169–176 (169–176) interacts with ATP; that stretch reads GDRKTGKT.

This sequence belongs to the ATPase alpha/beta chains family. F-type ATPases have 2 components, CF(1) - the catalytic core - and CF(0) - the membrane proton channel. CF(1) has five subunits: alpha(3), beta(3), gamma(1), delta(1), epsilon(1). CF(0) has three main subunits: a(1), b(2) and c(9-12). The alpha and beta chains form an alternating ring which encloses part of the gamma chain. CF(1) is attached to CF(0) by a central stalk formed by the gamma and epsilon chains, while a peripheral stalk is formed by the delta and b chains.

The protein localises to the cell membrane. The enzyme catalyses ATP + H2O + 4 H(+)(in) = ADP + phosphate + 5 H(+)(out). Produces ATP from ADP in the presence of a proton gradient across the membrane. The alpha chain is a regulatory subunit. This chain is ATP synthase subunit alpha, found in Leuconostoc mesenteroides subsp. mesenteroides (strain ATCC 8293 / DSM 20343 / BCRC 11652 / CCM 1803 / JCM 6124 / NCDO 523 / NBRC 100496 / NCIMB 8023 / NCTC 12954 / NRRL B-1118 / 37Y).